We begin with the raw amino-acid sequence, 76 residues long: Acyl carrier protein (76 aa).

One can recognise a Carrier domain in the interval 2–76 (SDIAERVKKI…QAIDYIQSHT (75 aa)). S36 is modified (O-(pantetheine 4'-phosphoryl)serine).

This sequence belongs to the acyl carrier protein (ACP) family. Post-translationally, 4'-phosphopantetheine is transferred from CoA to a specific serine of apo-ACP by AcpS. This modification is essential for activity because fatty acids are bound in thioester linkage to the sulfhydryl of the prosthetic group.

It localises to the cytoplasm. It functions in the pathway lipid metabolism; fatty acid biosynthesis. Carrier of the growing fatty acid chain in fatty acid biosynthesis. The sequence is that of Acyl carrier protein from Methylococcus capsulatus (strain ATCC 33009 / NCIMB 11132 / Bath).